We begin with the raw amino-acid sequence, 727 residues long: Transcription activator of gluconeogenesis TRV_01442 (727 aa).

The segment covering methionine 1–glutamate 32 has biased composition (polar residues). The disordered stretch occupies residues methionine 1–lysine 62. The span at alanine 39–arginine 55 shows a compositional bias: basic and acidic residues. Positions cysteine 65 to cysteine 93 form a DNA-binding region, zn(2)-C6 fungal-type. Polar residues-rich tracts occupy residues asparagine 129–alanine 213, proline 267–isoleucine 277, and methionine 361–asparagine 379. Disordered stretches follow at residues asparagine 129–threonine 224, aspartate 264–serine 297, serine 353–glutamine 399, asparagine 533–serine 567, and glycine 627–tryptophan 666. 2 stretches are compositionally biased toward low complexity: residues serine 380–glutamine 399 and glycine 543–serine 553. Polar residues predominate over residues glutamate 639 to arginine 661.

The protein belongs to the ERT1/acuK family.

It localises to the nucleus. Functionally, transcription factor which regulates nonfermentable carbon utilization. Activator of gluconeogenetic genes. This is Transcription activator of gluconeogenesis TRV_01442 from Trichophyton verrucosum (strain HKI 0517).